The primary structure comprises 169 residues: Cell division inhibitor SulA (169 aa).

A ftsZ binding region spans residues 106-112; the sequence is ALRTGNY. The interval 162 to 169 is lon protease binding; sequence KIHSNLYH.

It belongs to the SulA family. As to quaternary structure, interacts with FtsZ. In terms of processing, is rapidly cleaved and degraded by the Lon protease once DNA damage is repaired.

Component of the SOS system and an inhibitor of cell division. Accumulation of SulA causes rapid cessation of cell division and the appearance of long, non-septate filaments. In the presence of GTP, binds a polymerization-competent form of FtsZ in a 1:1 ratio, thus inhibiting FtsZ polymerization and therefore preventing it from participating in the assembly of the Z ring. This mechanism prevents the premature segregation of damaged DNA to daughter cells during cell division. In Escherichia coli O7:K1 (strain IAI39 / ExPEC), this protein is Cell division inhibitor SulA.